The primary structure comprises 192 residues: 3-isopropylmalate dehydratase small subunit (192 aa).

This sequence belongs to the LeuD family. LeuD type 1 subfamily. Heterodimer of LeuC and LeuD.

It catalyses the reaction (2R,3S)-3-isopropylmalate = (2S)-2-isopropylmalate. It functions in the pathway amino-acid biosynthesis; L-leucine biosynthesis; L-leucine from 3-methyl-2-oxobutanoate: step 2/4. Catalyzes the isomerization between 2-isopropylmalate and 3-isopropylmalate, via the formation of 2-isopropylmaleate. The protein is 3-isopropylmalate dehydratase small subunit of Oceanobacillus iheyensis (strain DSM 14371 / CIP 107618 / JCM 11309 / KCTC 3954 / HTE831).